The primary structure comprises 323 residues: Aspartate carbamoyltransferase catalytic subunit (323 aa).

Residues Arg-65 and Thr-66 each coordinate carbamoyl phosphate. Lys-93 contributes to the L-aspartate binding site. Carbamoyl phosphate contacts are provided by Arg-115, His-149, and Gln-152. Residues Arg-182 and Arg-237 each coordinate L-aspartate. 2 residues coordinate carbamoyl phosphate: Gly-278 and Pro-279.

The protein belongs to the aspartate/ornithine carbamoyltransferase superfamily. ATCase family. Heterododecamer (2C3:3R2) of six catalytic PyrB chains organized as two trimers (C3), and six regulatory PyrI chains organized as three dimers (R2).

The catalysed reaction is carbamoyl phosphate + L-aspartate = N-carbamoyl-L-aspartate + phosphate + H(+). It participates in pyrimidine metabolism; UMP biosynthesis via de novo pathway; (S)-dihydroorotate from bicarbonate: step 2/3. Its function is as follows. Catalyzes the condensation of carbamoyl phosphate and aspartate to form carbamoyl aspartate and inorganic phosphate, the committed step in the de novo pyrimidine nucleotide biosynthesis pathway. This chain is Aspartate carbamoyltransferase catalytic subunit, found in Aromatoleum aromaticum (strain DSM 19018 / LMG 30748 / EbN1) (Azoarcus sp. (strain EbN1)).